A 311-amino-acid chain; its full sequence is Methionyl-tRNA formyltransferase (311 aa).

110–113 (SLLP) provides a ligand contact to (6S)-5,6,7,8-tetrahydrofolate.

Belongs to the Fmt family.

The catalysed reaction is L-methionyl-tRNA(fMet) + (6R)-10-formyltetrahydrofolate = N-formyl-L-methionyl-tRNA(fMet) + (6S)-5,6,7,8-tetrahydrofolate + H(+). Its function is as follows. Attaches a formyl group to the free amino group of methionyl-tRNA(fMet). The formyl group appears to play a dual role in the initiator identity of N-formylmethionyl-tRNA by promoting its recognition by IF2 and preventing the misappropriation of this tRNA by the elongation apparatus. The protein is Methionyl-tRNA formyltransferase of Streptococcus mutans serotype c (strain ATCC 700610 / UA159).